Here is a 1130-residue protein sequence, read N- to C-terminus: DNA-directed RNA polymerase I subunit rpa2 (1130 aa).

Residues 1070 to 1096 (CKLCGSTLTIYSKKDYSNQTVSECKSC) form a C4-type zinc finger.

The protein belongs to the RNA polymerase beta chain family. In terms of assembly, component of the RNA polymerase I (Pol I) complex consisting of 14 subunits.

Its subcellular location is the nucleus. It is found in the nucleolus. The enzyme catalyses RNA(n) + a ribonucleoside 5'-triphosphate = RNA(n+1) + diphosphate. DNA-dependent RNA polymerase catalyzes the transcription of DNA into RNA using the four ribonucleoside triphosphates as substrates. Second largest core component of RNA polymerase I which synthesizes ribosomal RNA precursors. Proposed to contribute to the polymerase catalytic activity and forms the polymerase active center together with the largest subunit. Pol I is composed of mobile elements and RPA2 is part of the core element with the central large cleft and probably a clamp element that moves to open and close the cleft. The protein is DNA-directed RNA polymerase I subunit rpa2 (polr1b) of Dictyostelium discoideum (Social amoeba).